The chain runs to 586 residues: MASKKEQWKSDLYGDAVRDELEAFAEEGFESIPEDERDKWFTRFKFWGVFQQRTGQESYFMMRLTNANGVLEPGQLRTIAEVARDYATGPVDNPEFGNGWVDLTTRQSIQLHWLELEDIPEIWEQLESVGVTSRSAGGDTMRNITGCPVAGKDTHELVESKPLLDRFQSELREDDALSNMPRKFNISVTGCREGCAQDSINDIGLEPARKEVDGEVITGFNVRVGGGLGSRKPRVARSLDVFVADEERAYEVVRGFVELYHDHGNRDVRARARSRFFVDDWGTEKIRDRLESEYLDFELQSAGEDIRDEYTYNAGRPQSAGKSDHVGVHEQSDGRYYVGLSVAVGRLTAADALELADLADKYGSGKIRLTRRQNPIVMDVPAGALDDLLAEPLLSKHTPEPNPFQRGTVACTGTEFCSLALTETKARTARMLRWLRDNVEVPDDVHQLKIHYSGCTADCGQANTADIGLFGMRAQKDGEMVEAMDIGVGGGIGDEPSFVEWIHQRVPADEVPGAIASLVEAFAAHRTAGQTFRQWVEAEGPDAVAEYCEPIETDFEAPYMHDAKQSWYPFADEDEPPKTEQPMTSD.

Cys-411, Cys-417, Cys-455, and Cys-459 together coordinate [4Fe-4S] cluster. Residue Cys-459 participates in siroheme binding. The disordered stretch occupies residues 566-586 (SWYPFADEDEPPKTEQPMTSD).

This sequence belongs to the nitrite and sulfite reductase 4Fe-4S domain family. Monomer. Siroheme is required as a cofactor. Requires [4Fe-4S] cluster as cofactor.

The catalysed reaction is 6 oxidized [2Fe-2S]-[ferredoxin] + NH4(+) + 2 H2O = nitrite + 6 reduced [2Fe-2S]-[ferredoxin] + 8 H(+). Its pathway is nitrogen metabolism; nitrate reduction (assimilation). Its activity is regulated as follows. Inhibited by cyanide and azide. Its function is as follows. Catalyzes the reduction of nitrite to ammonium in the nitrate assimilation pathway, using ferredoxin as the electron donor. Can use reduced methyl viologen but neither NADPH nor NADH as electron donors. The polypeptide is Assimilatory ferredoxin-dependent nitrite reductase (Haloferax mediterranei (strain ATCC 33500 / DSM 1411 / JCM 8866 / NBRC 14739 / NCIMB 2177 / R-4) (Halobacterium mediterranei)).